Here is a 1657-residue protein sequence, read N- to C-terminus: Ras GTPase-activating-like protein IQGAP1 (1657 aa).

N-acetylserine is present on serine 2. Serine 2 is subject to Phosphoserine. The Calponin-homology (CH) domain maps to 44–159; the sequence is LCHLEEAKRW…YCIHALSLYL (116 aa). A Phosphotyrosine modification is found at tyrosine 172. Serine 330 carries the phosphoserine modification. The 26-residue stretch at 685–710 folds into the WW domain; it reads WVKHWVKGGYHYYHNLETQAGGWAEP. IQ domains are found at residues 745–774, 775–804, 805–834, and 835–864; these read NEGL…FLKK, QIPA…YLHS, HKDE…YFRD, and HIND…AEDP. Positions 956 to 1274 are C1; the sequence is GGLKALSKEK…FFQVACDVPE (319 aa). The Ras-GAP domain occupies 1020 to 1269; sequence YLLLRLFQTA…QKFRRFFQVA (250 aa). Residues 1276–1657 are C2; it reads QDKFNVDEYS…FLLNKKFYGK (382 aa). Serine 1441 is modified (phosphoserine).

Interacts with CDC42; the interaction is demonstrated with IQGAP1 in GTP-bound and in nucleotide-free state. Interacts with RAC1. Does not interact with RHOA. Interacts with TSG101. Interacts with PAK6. Interacts with SASH1. Interacts with PJVK. Interacts with SLC26A4. This interaction enhances the chloride-bicarbonate exchange activity of SLC26A4. Interacts with SVEP1. Interacts with ILK; the interaction is required for localization of IQGAP to the cell cortex. In terms of assembly, (Microbial infection) In case of infection, interacts with S.typhimurium protein sseI. In terms of tissue distribution, expressed in the kidney (at protein level).

Its subcellular location is the cell membrane. It is found in the nucleus. The protein localises to the cytoplasm. The protein resides in the cell cortex. It localises to the apical cell membrane. Its subcellular location is the basolateral cell membrane. Its function is as follows. Plays a crucial role in regulating the dynamics and assembly of the actin cytoskeleton. Recruited to the cell cortex by interaction with ILK which allows it to cooperate with its effector DIAPH1 to locally stabilize microtubules and allow stable insertion of caveolae into the plasma membrane. Binds to activated CDC42 but does not stimulate its GTPase activity. Associates with calmodulin. May promote neurite outgrowth. May play a possible role in cell cycle regulation by contributing to cell cycle progression after DNA replication arrest. In Mus musculus (Mouse), this protein is Ras GTPase-activating-like protein IQGAP1 (Iqgap1).